The chain runs to 117 residues: Large ribosomal subunit protein bL19 (117 aa).

It belongs to the bacterial ribosomal protein bL19 family.

In terms of biological role, this protein is located at the 30S-50S ribosomal subunit interface and may play a role in the structure and function of the aminoacyl-tRNA binding site. This is Large ribosomal subunit protein bL19 from Kineococcus radiotolerans (strain ATCC BAA-149 / DSM 14245 / SRS30216).